The sequence spans 590 residues: Kinetochore protein ndc-80 (590 aa).

Coiled-coil stretches lie at residues 269 to 342 and 450 to 525; these read KGNE…KQIH and ELET…MKLD.

Belongs to the NDC80/HEC1 family. In terms of assembly, component of the NDC80 complex, which is composed of at least ndc-80 and him-10. The NDC80 complex interacts with knl-1. Interacts with the RZZ complex components rod-1 (via N-terminus) and zwl-1.

Its subcellular location is the nucleus. The protein resides in the chromosome. It is found in the centromere. The protein localises to the kinetochore. It localises to the cytoplasm. Its subcellular location is the cytoskeleton. Its function is as follows. Acts as a component of the essential kinetochore-associated ndc-80 complex, which is required for chromosome segregation in mitosis and meiosis and spindle checkpoint activity. Plays a role in kinetochore assembly and recruits the checkpoint protein mdf-2 and the spindly-like protein spdl-1 to unattached kinetochores. Mediates the formation of end-on kinetochore-microtubule attachments through recruitment of spdl-1. The ndc-80 complex synergistically enhances the affinity of the ska-1 complex for microtubules and may allow the ndc-80 complex to track depolymerizing microtubules. The polypeptide is Kinetochore protein ndc-80 (ndc-80) (Caenorhabditis elegans).